The following is a 118-amino-acid chain: Non-specific lipid-transfer protein-like 1 (118 aa).

One can recognise an SCP2 domain in the interval 5–113 (SDVIFEEIKE…KLRTILDPKM (109 aa)).

The protein is Non-specific lipid-transfer protein-like 1 (nlt-1) of Caenorhabditis elegans.